A 607-amino-acid chain; its full sequence is UvrABC system protein C (607 aa).

Residues 16–94 enclose the GIY-YIG domain; that stretch reads GRPGVYRMFD…IKEWRPPYNI (79 aa). The 36-residue stretch at 203–238 folds into the UVR domain; it reads NALSEELSASMEKASMALEFERAAELRDQISMLRRV.

It belongs to the UvrC family. In terms of assembly, interacts with UvrB in an incision complex.

Its subcellular location is the cytoplasm. Its function is as follows. The UvrABC repair system catalyzes the recognition and processing of DNA lesions. UvrC both incises the 5' and 3' sides of the lesion. The N-terminal half is responsible for the 3' incision and the C-terminal half is responsible for the 5' incision. This chain is UvrABC system protein C, found in Ectopseudomonas mendocina (strain ymp) (Pseudomonas mendocina).